A 254-amino-acid chain; its full sequence is Glc operon transcriptional activator (254 aa).

The HTH gntR-type domain occupies 6–74; it reads RPICEVVAES…QGRDSRVARL (69 aa). The H-T-H motif DNA-binding region spans 34–53; the sequence is ERRLCEKLGFSRSALREGLT.

In terms of biological role, transcriptional activator of the glcDEFGB operon which is associated with glycolate utilization, and encodes malate synthase G and the genes needed for glycolate oxidase activity. Also negatively regulates the transcription of its own gene. Glycolate acts as an effector, but GlcC can also use acetate as an alternative effector. This chain is Glc operon transcriptional activator (glcC), found in Escherichia coli O6:H1 (strain CFT073 / ATCC 700928 / UPEC).